The primary structure comprises 911 residues: Chitin synthase G (911 aa).

2 disordered regions span residues 1-66 and 107-138; these read MAYQ…VSGY and GRVASPYARSDTSSTEAWRQRQAPGGGPGGLR. The segment covering 12 to 34 has biased composition (basic and acidic residues); that stretch reads PHYDDNGHRLQDLPHGSYEEEAS. Residues 54 to 66 are compositionally biased toward polar residues; sequence QHGSSTTRPVSGY. The next 6 membrane-spanning stretches (helical) occupy residues 579–599, 624–644, 659–679, 711–731, 840–860, and 879–899; these read IFSTVLTWFSLASYWLTTTVI, IINTIVKYVYLGFLLLQFILA, SFVVFGIIQVYVVIDALYLVV, IIIIALAATFGLYFVASFMYL, LVTFWIFSNAFLAVCITSDGV, and ALLWSNAVVALFRFIGACWFL.

This sequence belongs to the chitin synthase family. Class III subfamily.

It is found in the cell membrane. It catalyses the reaction [(1-&gt;4)-N-acetyl-beta-D-glucosaminyl](n) + UDP-N-acetyl-alpha-D-glucosamine = [(1-&gt;4)-N-acetyl-beta-D-glucosaminyl](n+1) + UDP + H(+). Functionally, polymerizes chitin, a structural polymer of the cell wall and septum, by transferring the sugar moiety of UDP-GlcNAc to the non-reducing end of the growing chitin polymer. The sequence is that of Chitin synthase G (chsG) from Aspergillus fumigatus (strain ATCC MYA-4609 / CBS 101355 / FGSC A1100 / Af293) (Neosartorya fumigata).